We begin with the raw amino-acid sequence, 383 residues long: E3 ubiquitin-protein ligase SPL2 (383 aa).

Topologically, residues 1 to 14 (MSSPERALLNLLTD) are cytoplasmic. A helical membrane pass occupies residues 15–35 (IALSFDGAILGLTLAVSAVGS). Residues 36 to 269 (ALKYASTNAA…MIEDLMEQTN (234 aa)) lie on the Chloroplast intermembrane side of the membrane. The chain crosses the membrane as a helical span at residues 270-290 (FIFLGSVILGIVSVGILSYAA). Residues 291 to 383 (VRTWNKWKQW…IRGSMRVYYS (93 aa)) are Cytoplasmic-facing. An RING-type zinc finger spans residues 331–370 (CVICVSRRRVPAFIPCGHVVCCRRCASTVERELNPKCPVC).

It is found in the plastid. It localises to the chloroplast outer membrane. It carries out the reaction S-ubiquitinyl-[E2 ubiquitin-conjugating enzyme]-L-cysteine + [acceptor protein]-L-lysine = [E2 ubiquitin-conjugating enzyme]-L-cysteine + N(6)-ubiquitinyl-[acceptor protein]-L-lysine.. It functions in the pathway protein modification; protein ubiquitination. Possesses E3 ubiquitin-protein ligase activity. This is E3 ubiquitin-protein ligase SPL2 from Arabidopsis thaliana (Mouse-ear cress).